A 358-amino-acid polypeptide reads, in one-letter code: Alanine racemase (358 aa).

The active-site Proton acceptor; specific for D-alanine is Lys35. Lys35 carries the post-translational modification N6-(pyridoxal phosphate)lysine. Arg130 contacts substrate. Tyr255 (proton acceptor; specific for L-alanine) is an active-site residue. Met303 lines the substrate pocket.

This sequence belongs to the alanine racemase family. Requires pyridoxal 5'-phosphate as cofactor.

It catalyses the reaction L-alanine = D-alanine. Its pathway is amino-acid biosynthesis; D-alanine biosynthesis; D-alanine from L-alanine: step 1/1. Functionally, catalyzes the interconversion of L-alanine and D-alanine. May also act on other amino acids. The sequence is that of Alanine racemase (alr) from Shewanella baltica (strain OS195).